A 363-amino-acid chain; its full sequence is S-adenosylmethionine:tRNA ribosyltransferase-isomerase (363 aa).

This sequence belongs to the QueA family. As to quaternary structure, monomer.

The protein resides in the cytoplasm. The enzyme catalyses 7-aminomethyl-7-carbaguanosine(34) in tRNA + S-adenosyl-L-methionine = epoxyqueuosine(34) in tRNA + adenine + L-methionine + 2 H(+). It functions in the pathway tRNA modification; tRNA-queuosine biosynthesis. Its function is as follows. Transfers and isomerizes the ribose moiety from AdoMet to the 7-aminomethyl group of 7-deazaguanine (preQ1-tRNA) to give epoxyqueuosine (oQ-tRNA). This chain is S-adenosylmethionine:tRNA ribosyltransferase-isomerase, found in Brucella melitensis biotype 2 (strain ATCC 23457).